We begin with the raw amino-acid sequence, 523 residues long: GMP synthase [glutamine-hydrolyzing] (523 aa).

Positions 8–205 (KILILDFGSQ…VVNICGCETK (198 aa)) constitute a Glutamine amidotransferase type-1 domain. C85 functions as the Nucleophile in the catalytic mechanism. Catalysis depends on residues H179 and E181. One can recognise a GMPS ATP-PPase domain in the interval 206-398 (WTAENIIEDA…LGLPAEMINR (193 aa)). 233–239 (SGGVDSS) provides a ligand contact to ATP.

Homodimer.

The enzyme catalyses XMP + L-glutamine + ATP + H2O = GMP + L-glutamate + AMP + diphosphate + 2 H(+). It participates in purine metabolism; GMP biosynthesis; GMP from XMP (L-Gln route): step 1/1. In terms of biological role, catalyzes the synthesis of GMP from XMP. The polypeptide is GMP synthase [glutamine-hydrolyzing] (Haemophilus influenzae (strain PittGG)).